The primary structure comprises 537 residues: Synaptotagmin-C (537 aa).

Residues 1-52 (MSGDGEDELCRNALALVNELCFSVRGNHNNEKCIEFSYLLRDRDRTRHIETD) are Vesicular-facing. A helical transmembrane segment spans residues 53–78 (ISVSLLSVIVTFCGIVLLGVSLFVSW). The Cytoplasmic portion of the chain corresponds to 79–537 (KLCWIPWRDK…TIVVESPHSV (459 aa)). 2 disordered regions span residues 92 to 111 (PQRR…HHSH) and 142 to 200 (IKLS…EFGT). Residues 100-110 (HPHQHLHHHHS) show a composition bias toward basic residues. Residues 143 to 174 (KLSQTSPDIPVDTSSGSKENNIPNAHSQQQVS) show a composition bias toward polar residues. A phospholipid binding region spans residues 228-477 (EAKKHQKVNC…VIGMCRVGNA (250 aa)). C2 domains follow at residues 236-357 (NCGR…TIWR) and 368-501 (DLGE…EQWH). Residues aspartate 267, aspartate 273, aspartate 325, phenylalanine 326, aspartate 327, serine 330, aspartate 333, aspartate 399, aspartate 405, aspartate 459, and aspartate 461 each contribute to the Ca(2+) site.

It belongs to the synaptotagmin family. As to quaternary structure, homodimer or homotrimer (possible). Ca(2+) is required as a cofactor.

It is found in the cytoplasmic vesicle. Its subcellular location is the secretory vesicle. The protein localises to the synaptic vesicle membrane. It localises to the synapse. May have a regulatory role in the membrane interactions during trafficking of synaptic vesicles at the active zone of the synapse. It binds acidic phospholipids with a specificity that requires the presence of both an acidic head group and a diacyl backbone. The polypeptide is Synaptotagmin-C (P65-C) (Diplobatis ommata (Ocellated electric ray)).